Here is a 647-residue protein sequence, read N- to C-terminus: 1-deoxy-D-xylulose-5-phosphate synthase (647 aa).

Thiamine diphosphate is bound by residues H88 and 129 to 131 (GHA). D160 is a binding site for Mg(2+). Thiamine diphosphate is bound by residues 161 to 162 (GA), N189, Y300, and E377. N189 serves as a coordination point for Mg(2+).

This sequence belongs to the transketolase family. DXPS subfamily. As to quaternary structure, homodimer. Requires Mg(2+) as cofactor. Thiamine diphosphate is required as a cofactor.

It carries out the reaction D-glyceraldehyde 3-phosphate + pyruvate + H(+) = 1-deoxy-D-xylulose 5-phosphate + CO2. It participates in metabolic intermediate biosynthesis; 1-deoxy-D-xylulose 5-phosphate biosynthesis; 1-deoxy-D-xylulose 5-phosphate from D-glyceraldehyde 3-phosphate and pyruvate: step 1/1. Functionally, catalyzes the acyloin condensation reaction between C atoms 2 and 3 of pyruvate and glyceraldehyde 3-phosphate to yield 1-deoxy-D-xylulose-5-phosphate (DXP). In Dehalococcoides mccartyi (strain CBDB1), this protein is 1-deoxy-D-xylulose-5-phosphate synthase.